A 776-amino-acid chain; its full sequence is DExH-box ATP-dependent RNA helicase DExH18, mitochondrial (776 aa).

The transit peptide at 1-84 (MARGVAGVLR…RSFSSTVDNN (84 aa)) directs the protein to the mitochondrion. Positions 80 to 101 (TVDNNGENDDIEESVGSESDDY) are disordered. The segment covering 85–101 (GENDDIEESVGSESDDY) has biased composition (acidic residues). Positions 268–426 (FARAMKRKIV…RFKPLVVEAK (159 aa)) constitute a Helicase ATP-binding domain. Residue 281 to 288 (GPTNSGKT) coordinates ATP. The DEIH box; degenerate signature appears at 361-364 (DEIQ). The region spanning 427–595 (TLLGELKNVK…LFAAQVPDMA (169 aa)) is the Helicase C-terminal domain.

This sequence belongs to the DExH box helicase family. As to quaternary structure, homodimer; in free form. Component of the mitochondrial degradosome (mtEXO) complex which is a heteropentamer containing 2 copies of SUPV3L1 and 3 copies of PNPT1. The cofactor is Mg(2+). Requires Mn(2+) as cofactor.

It is found in the nucleus. The protein localises to the mitochondrion matrix. Its subcellular location is the mitochondrion nucleoid. It carries out the reaction ATP + H2O = ADP + phosphate + H(+). Major helicase player in mitochondrial RNA metabolism. Component of the mitochondrial degradosome (mtEXO) complex, that degrades 3' overhang double-stranded RNA with a 3'-to-5' directionality in an ATP-dependent manner. ATPase and ATP-dependent multisubstrate helicase, able to unwind double-stranded (ds) DNA and RNA, and RNA/DNA heteroduplexes in the 5'-to-3' direction. Plays a role in the RNA surveillance system in mitochondria; regulates the stability of mature mRNAs, the removal of aberrantly formed mRNAs and the rapid degradation of non coding processing intermediates. This chain is DExH-box ATP-dependent RNA helicase DExH18, mitochondrial, found in Arabidopsis thaliana (Mouse-ear cress).